We begin with the raw amino-acid sequence, 409 residues long: Argininosuccinate synthase (409 aa).

ATP-binding positions include alanine 12–serine 20 and alanine 39. Tyrosine 91 serves as a coordination point for L-citrulline. Glycine 121 provides a ligand contact to ATP. 3 residues coordinate L-aspartate: threonine 123, asparagine 127, and aspartate 128. Asparagine 127 serves as a coordination point for L-citrulline. Arginine 131, serine 180, serine 189, glutamate 265, and tyrosine 277 together coordinate L-citrulline.

It belongs to the argininosuccinate synthase family. Type 1 subfamily. In terms of assembly, homotetramer.

It is found in the cytoplasm. It carries out the reaction L-citrulline + L-aspartate + ATP = 2-(N(omega)-L-arginino)succinate + AMP + diphosphate + H(+). It functions in the pathway amino-acid biosynthesis; L-arginine biosynthesis; L-arginine from L-ornithine and carbamoyl phosphate: step 2/3. The sequence is that of Argininosuccinate synthase from Buchnera aphidicola subsp. Baizongia pistaciae (strain Bp).